The chain runs to 353 residues: Photosystem II D2 protein (353 aa).

Threonine 2 carries the N-acetylthreonine modification. Threonine 2 bears the Phosphothreonine mark. Residues cysteine 41–threonine 61 traverse the membrane as a helical segment. Histidine 118 contributes to the chlorophyll a binding site. Residues glycine 125–proline 141 traverse the membrane as a helical segment. The pheophytin a site is built by glutamine 130 and asparagine 143. A helical transmembrane segment spans residues valine 153–serine 166. Chlorophyll a is bound at residue histidine 198. Residues alanine 208–aspartate 228 form a helical membrane-spanning segment. A plastoquinone contacts are provided by histidine 215 and phenylalanine 262. Histidine 215 contributes to the Fe cation binding site. Residue histidine 269 participates in Fe cation binding. Residues glycine 279–arginine 295 traverse the membrane as a helical segment.

Belongs to the reaction center PufL/M/PsbA/D family. In terms of assembly, PSII is composed of 1 copy each of membrane proteins PsbA, PsbB, PsbC, PsbD, PsbE, PsbF, PsbH, PsbI, PsbJ, PsbK, PsbL, PsbM, PsbT, PsbX, PsbY, PsbZ, Psb30/Ycf12, at least 3 peripheral proteins of the oxygen-evolving complex and a large number of cofactors. It forms dimeric complexes. The D1/D2 heterodimer binds P680, chlorophylls that are the primary electron donor of PSII, and subsequent electron acceptors. It shares a non-heme iron and each subunit binds pheophytin, quinone, additional chlorophylls, carotenoids and lipids. There is also a Cl(-1) ion associated with D1 and D2, which is required for oxygen evolution. The PSII complex binds additional chlorophylls, carotenoids and specific lipids. serves as cofactor.

The protein localises to the plastid. The protein resides in the chloroplast thylakoid membrane. It catalyses the reaction 2 a plastoquinone + 4 hnu + 2 H2O = 2 a plastoquinol + O2. Photosystem II (PSII) is a light-driven water:plastoquinone oxidoreductase that uses light energy to abstract electrons from H(2)O, generating O(2) and a proton gradient subsequently used for ATP formation. It consists of a core antenna complex that captures photons, and an electron transfer chain that converts photonic excitation into a charge separation. The D1/D2 (PsbA/PsbD) reaction center heterodimer binds P680, the primary electron donor of PSII as well as several subsequent electron acceptors. D2 is needed for assembly of a stable PSII complex. This Lactuca sativa (Garden lettuce) protein is Photosystem II D2 protein.